Consider the following 164-residue polypeptide: FMN reductase (NADH) RutF (164 aa).

Belongs to the non-flavoprotein flavin reductase family. RutF subfamily.

It carries out the reaction FMNH2 + NAD(+) = FMN + NADH + 2 H(+). Functionally, catalyzes the reduction of FMN to FMNH2 which is used to reduce pyrimidine by RutA via the Rut pathway. The sequence is that of FMN reductase (NADH) RutF from Shigella flexneri serotype X (strain 2002017).